The following is a 258-amino-acid chain: E3 ubiquitin ligase TRIM40 (258 aa).

The RING-type zinc-finger motif lies at 14–56; the sequence is CPICQESLKEAVSTNCGHLFCRVCLTQHVEKASASGVFCCPLC. Residues 66 to 107 form a B box-type zinc finger; it reads GTGYICPNHQKRVCRFCEESRLLLCVECLVSPEHMSHHELTI. Cys71, His74, Cys93, and His99 together coordinate Zn(2+). The stretch at 107–159 forms a coiled coil; sequence IENALSHYKERLNRRSRKLRKDIAELQRLKAQQEKKLQALQFQVDHGNHRLEA.

This sequence belongs to the TRIM/RBCC family. In terms of assembly, interacts with NEDD8. Highly expressed in normal gastrointestinal epithelia but that is down-regulated in gastrointestinal carcinomas and chronic inflammatory lesions of the gastrointestinal tract.

The enzyme catalyses S-ubiquitinyl-[E2 ubiquitin-conjugating enzyme]-L-cysteine + [acceptor protein]-L-lysine = [E2 ubiquitin-conjugating enzyme]-L-cysteine + N(6)-ubiquitinyl-[acceptor protein]-L-lysine.. Its function is as follows. E3 ubiquitin-protein ligase that plays a role in the limitation of the innate immune response. Mediates inhibition of the RLR signaling pathway by ubiquitinating RIGI and IFIH1 receptors, leading to their proteasomal degradation. Also promotes the neddylation of IKBKG/NEMO, stabilizing NFKBIA, and thereby inhibiting of NF-kappa-B nuclear translocation and activation. The protein is E3 ubiquitin ligase TRIM40 (TRIM40) of Homo sapiens (Human).